A 254-amino-acid chain; its full sequence is Type III pantothenate kinase (254 aa).

An ATP-binding site is contributed by 7-14 (DVGNTRLK). Residues Y96 and 103-106 (GSDR) contribute to the substrate site. D105 (proton acceptor) is an active-site residue. T133 is an ATP binding site. T183 contributes to the substrate binding site.

The protein belongs to the type III pantothenate kinase family. Homodimer. Requires NH4(+) as cofactor. K(+) serves as cofactor.

Its subcellular location is the cytoplasm. The enzyme catalyses (R)-pantothenate + ATP = (R)-4'-phosphopantothenate + ADP + H(+). Its pathway is cofactor biosynthesis; coenzyme A biosynthesis; CoA from (R)-pantothenate: step 1/5. Catalyzes the phosphorylation of pantothenate (Pan), the first step in CoA biosynthesis. The sequence is that of Type III pantothenate kinase from Paracidovorax citrulli (strain AAC00-1) (Acidovorax citrulli).